The chain runs to 268 residues: Tryptophan synthase alpha chain (268 aa).

Residues Glu49 and Asp60 each act as proton acceptor in the active site.

Belongs to the TrpA family. As to quaternary structure, tetramer of two alpha and two beta chains.

The enzyme catalyses (1S,2R)-1-C-(indol-3-yl)glycerol 3-phosphate + L-serine = D-glyceraldehyde 3-phosphate + L-tryptophan + H2O. The protein operates within amino-acid biosynthesis; L-tryptophan biosynthesis; L-tryptophan from chorismate: step 5/5. The alpha subunit is responsible for the aldol cleavage of indoleglycerol phosphate to indole and glyceraldehyde 3-phosphate. The polypeptide is Tryptophan synthase alpha chain (Aeromonas hydrophila subsp. hydrophila (strain ATCC 7966 / DSM 30187 / BCRC 13018 / CCUG 14551 / JCM 1027 / KCTC 2358 / NCIMB 9240 / NCTC 8049)).